We begin with the raw amino-acid sequence, 206 residues long: Small ribosomal subunit protein uS4 (206 aa).

Residues 96–156 enclose the S4 RNA-binding domain; it reads TRLDNVVYRM…EKSRTQARIK (61 aa).

Belongs to the universal ribosomal protein uS4 family. Part of the 30S ribosomal subunit. Contacts protein S5. The interaction surface between S4 and S5 is involved in control of translational fidelity.

One of the primary rRNA binding proteins, it binds directly to 16S rRNA where it nucleates assembly of the body of the 30S subunit. In terms of biological role, with S5 and S12 plays an important role in translational accuracy. The polypeptide is Small ribosomal subunit protein uS4 (Shewanella denitrificans (strain OS217 / ATCC BAA-1090 / DSM 15013)).